Consider the following 489-residue polypeptide: Aklavinone 12-hydroxylase DnrF (489 aa).

Residues leucine 17–glycine 18, glutamate 37, glutamine 121, and leucine 145 contribute to the FAD site. Residue tyrosine 224 is the Proton acceptor of the active site. Aspartate 308 contributes to the FAD binding site. An aklavinone-binding site is contributed by glycine 317. Positions valine 402–histidine 428 are disordered.

It belongs to the PheA/TfdB FAD monooxygenase family. Monomer. FAD is required as a cofactor.

It catalyses the reaction aklavinone + NADPH + O2 + H(+) = epsilon-rhodomycinone + NADP(+) + H2O. The protein operates within antibiotic biosynthesis; daunorubicin biosynthesis. It functions in the pathway antibiotic biosynthesis; carminomycin biosynthesis. Its pathway is antibiotic biosynthesis; rhodomycin biosynthesis. It participates in antibiotic biosynthesis; doxorubicin biosynthesis. Its function is as follows. Involved in the biosynthesis of the anthracyclines carminomycin, rhodomycin, daunorubicin (daunomycin) and doxorubicin (adriamycin) which are aromatic polyketide antibiotics that exhibit high cytotoxicity and are widely applied in the chemotherapy of a variety of cancers. Catalyzes the incorporation of a hydroxyl group at position C-11 of aklavinone, resulting in epsilon-rhodomycinone. The polypeptide is Aklavinone 12-hydroxylase DnrF (dnrF) (Streptomyces peucetius subsp. caesius).